The following is a 323-amino-acid chain: Acetyl esterase (323 aa).

An Involved in the stabilization of the negatively charged intermediate by the formation of the oxyanion hole motif is present at residues His-91 to Gly-93. Active-site residues include Ser-165, Asp-262, and His-292.

It belongs to the 'GDXG' lipolytic enzyme family. As to quaternary structure, homodimer. Interacts with MalT and MelA.

The protein resides in the cytoplasm. In terms of biological role, displays esterase activity towards short chain fatty esters (acyl chain length of up to 8 carbons). Able to hydrolyze triacetylglycerol (triacetin) and tributyrylglycerol (tributyrin), but not trioleylglycerol (triolein) or cholesterol oleate. Negatively regulates MalT activity by antagonizing maltotriose binding. Inhibits MelA galactosidase activity. In Salmonella choleraesuis (strain SC-B67), this protein is Acetyl esterase.